The primary structure comprises 358 residues: MVPAELFARVEFPDHKILAQTKDFHDSLTKPPGSLGKLEQIGCFISACQGQIPPRPLNNSKIVVFAGDHGVATKGVSAYPSSVSLQMAENITNGGAAINVIARTTGTSVRLIDTSLDHEAWGDERVSRSCGSIDVEDAMTQEQVERALEIGKRIADQEVDAGADILIPGDLGIGNTTTAAALVGTFTLAEPVVVVGRGTGIDDEAWKLKVSAIRDAMFRVRDLRQDPIAIARKISSPDLAAMAAFIAQAAVRRTPVLLDGVVVTAAALLANKLAPGARRWFIAGHRSTEPAHSVALDALALDPILEFGMYLGEGSGAATALPMVKIAVDLMNDMSTFSSAGVDGPLNASSEAPEQNTE.

E313 (proton acceptor) is an active-site residue.

Belongs to the CobT family.

It carries out the reaction 5,6-dimethylbenzimidazole + nicotinate beta-D-ribonucleotide = alpha-ribazole 5'-phosphate + nicotinate + H(+). The protein operates within nucleoside biosynthesis; alpha-ribazole biosynthesis; alpha-ribazole from 5,6-dimethylbenzimidazole: step 1/2. Functionally, catalyzes the synthesis of alpha-ribazole-5'-phosphate from nicotinate mononucleotide (NAMN) and 5,6-dimethylbenzimidazole (DMB). The protein is Nicotinate-nucleotide--dimethylbenzimidazole phosphoribosyltransferase of Corynebacterium glutamicum (strain R).